Consider the following 258-residue polypeptide: Global transcriptional regulator CodY (258 aa).

The interval Met1–Leu156 is GAF domain. Residues Ala204–Arg223 constitute a DNA-binding region (H-T-H motif).

This sequence belongs to the CodY family.

It localises to the cytoplasm. In terms of biological role, DNA-binding global transcriptional regulator which is involved in the adaptive response to starvation and acts by directly or indirectly controlling the expression of numerous genes in response to nutrient availability. During rapid exponential growth, CodY is highly active and represses genes whose products allow adaptation to nutrient depletion. This Clostridium kluyveri (strain NBRC 12016) protein is Global transcriptional regulator CodY.